Reading from the N-terminus, the 225-residue chain is uncharacterized protein (225 aa).

Residues 1–22 (MLQHYSVSWKKGLAALCLLAVA) form the signal peptide. In terms of domain architecture, 4Fe-4S ferredoxin-type spans 161–190 (GNLTAAEEKKTGCLVCLDSCPVGIVSNATY).

This is an uncharacterized protein from Escherichia coli (strain K12).